Reading from the N-terminus, the 249-residue chain is Adapter protein MecA (249 aa).

The protein belongs to the MecA family. In terms of assembly, homodimer.

Functionally, enables the recognition and targeting of unfolded and aggregated proteins to the ClpC protease or to other proteins involved in proteolysis. This chain is Adapter protein MecA, found in Streptococcus thermophilus (strain ATCC BAA-250 / LMG 18311).